Reading from the N-terminus, the 624-residue chain is Phosphomethylpyrimidine synthase (624 aa).

The tract at residues 75–99 (SPWIESRGDTESYTGRTPFALDDGL) is disordered. Residues Asn-226, Met-255, Tyr-284, His-320, 340–342 (SRG), 381–384 (DGLR), and Glu-420 contribute to the substrate site. His-424 contacts Zn(2+). Substrate is bound at residue Tyr-447. Residue His-488 coordinates Zn(2+). 3 residues coordinate [4Fe-4S] cluster: Cys-568, Cys-571, and Cys-576.

This sequence belongs to the ThiC family. In terms of assembly, homodimer. It depends on [4Fe-4S] cluster as a cofactor.

It catalyses the reaction 5-amino-1-(5-phospho-beta-D-ribosyl)imidazole + S-adenosyl-L-methionine = 4-amino-2-methyl-5-(phosphooxymethyl)pyrimidine + CO + 5'-deoxyadenosine + formate + L-methionine + 3 H(+). The protein operates within cofactor biosynthesis; thiamine diphosphate biosynthesis. In terms of biological role, catalyzes the synthesis of the hydroxymethylpyrimidine phosphate (HMP-P) moiety of thiamine from aminoimidazole ribotide (AIR) in a radical S-adenosyl-L-methionine (SAM)-dependent reaction. This chain is Phosphomethylpyrimidine synthase, found in Albidiferax ferrireducens (strain ATCC BAA-621 / DSM 15236 / T118) (Rhodoferax ferrireducens).